The primary structure comprises 286 residues: Lipid phosphate phosphatase epsilon 2, chloroplastic (286 aa).

The N-terminal 60 residues, 1 to 60 (MAASSSSLLLLHKPTYNFHFAASSVPTYINSARFRISSSIFPLDRRRRRRIWSVSGFKSM), are a transit peptide targeting the chloroplast. 5 helical membrane passes run 133–149 (LWAV…SVAL), 173–193 (AQSI…WLGT), 194–214 (NVLS…FTWL), 226–246 (VVVG…TWNS), and 260–280 (IALF…VLLN).

It belongs to the PA-phosphatase related phosphoesterase family. Expressed in root tips, root branch points, cotyledons and leaves.

It localises to the plastid. Its subcellular location is the chloroplast inner membrane. With respect to regulation, inhibited by Mg(2+). Its function is as follows. Exhibits phosphatidate phosphatase (PAP) activity in vitro. May play a secondary role as PAP in plastids. In Arabidopsis thaliana (Mouse-ear cress), this protein is Lipid phosphate phosphatase epsilon 2, chloroplastic (LPPE2).